The chain runs to 109 residues: Small ribosomal subunit protein uS10 (109 aa).

Belongs to the universal ribosomal protein uS10 family. As to quaternary structure, part of the 30S ribosomal subunit.

Involved in the binding of tRNA to the ribosomes. This Nanoarchaeum equitans (strain Kin4-M) protein is Small ribosomal subunit protein uS10.